Reading from the N-terminus, the 989-residue chain is Phosphoenolpyruvate carboxylase (989 aa).

Active-site residues include His175 and Lys630.

It belongs to the PEPCase type 1 family. Mg(2+) is required as a cofactor.

It catalyses the reaction oxaloacetate + phosphate = phosphoenolpyruvate + hydrogencarbonate. In terms of biological role, forms oxaloacetate, a four-carbon dicarboxylic acid source for the tricarboxylic acid cycle. This chain is Phosphoenolpyruvate carboxylase, found in Prochlorococcus marinus (strain MIT 9215).